A 397-amino-acid polypeptide reads, in one-letter code: Argininosuccinate synthase (397 aa).

8 to 16 lines the ATP pocket; it reads AYSGGLDTS. L-citrulline is bound at residue Tyr-87. Gly-117 serves as a coordination point for ATP. L-aspartate contacts are provided by Thr-119, Asn-123, and Asp-124. L-citrulline is bound at residue Asn-123. Residues Arg-127, Ser-175, Glu-259, and Tyr-271 each coordinate L-citrulline.

Belongs to the argininosuccinate synthase family. Type 1 subfamily. In terms of assembly, homotetramer.

The protein localises to the cytoplasm. The enzyme catalyses L-citrulline + L-aspartate + ATP = 2-(N(omega)-L-arginino)succinate + AMP + diphosphate + H(+). It functions in the pathway amino-acid biosynthesis; L-arginine biosynthesis; L-arginine from L-ornithine and carbamoyl phosphate: step 2/3. The chain is Argininosuccinate synthase from Streptomyces clavuligerus.